The following is a 423-amino-acid chain: Dihydroorotase (423 aa).

Zn(2+) is bound by residues H56 and H58. Substrate is bound by residues 58 to 60 (HFR) and N89. K137, H168, H227, and D302 together coordinate Zn(2+). N6-carboxylysine is present on K137. D302 is a catalytic residue. H306 contributes to the substrate binding site.

It belongs to the metallo-dependent hydrolases superfamily. DHOase family. Class I DHOase subfamily. Zn(2+) serves as cofactor.

It catalyses the reaction (S)-dihydroorotate + H2O = N-carbamoyl-L-aspartate + H(+). It functions in the pathway pyrimidine metabolism; UMP biosynthesis via de novo pathway; (S)-dihydroorotate from bicarbonate: step 3/3. Its function is as follows. Catalyzes the reversible cyclization of carbamoyl aspartate to dihydroorotate. This Methanocaldococcus jannaschii (strain ATCC 43067 / DSM 2661 / JAL-1 / JCM 10045 / NBRC 100440) (Methanococcus jannaschii) protein is Dihydroorotase.